Here is a 317-residue protein sequence, read N- to C-terminus: Transaldolase (317 aa).

K132 serves as the catalytic Schiff-base intermediate with substrate.

This sequence belongs to the transaldolase family. Type 1 subfamily. In terms of assembly, homodimer.

The protein resides in the cytoplasm. The enzyme catalyses D-sedoheptulose 7-phosphate + D-glyceraldehyde 3-phosphate = D-erythrose 4-phosphate + beta-D-fructose 6-phosphate. It functions in the pathway carbohydrate degradation; pentose phosphate pathway; D-glyceraldehyde 3-phosphate and beta-D-fructose 6-phosphate from D-ribose 5-phosphate and D-xylulose 5-phosphate (non-oxidative stage): step 2/3. Functionally, transaldolase is important for the balance of metabolites in the pentose-phosphate pathway. This chain is Transaldolase, found in Mannheimia succiniciproducens (strain KCTC 0769BP / MBEL55E).